Reading from the N-terminus, the 651-residue chain is p-hydroxybenzoic acid efflux pump subunit AaeB (651 aa).

Helical transmembrane passes span 11–31 (FACK…WFEM), 41–61 (AAIV…SGAI), 65–85 (GLLR…IIMT), 91–111 (VVML…SSLV), 117–137 (YVFA…QSSP), 150–170 (EIIL…PRSV), 367–387 (LFWL…LGVV), 404–424 (FLIG…LVLP), 428–448 (QSLL…GIEI), 454–474 (GSLG…PMTF), and 480–500 (LDNA…IMLI).

Belongs to the aromatic acid exporter ArAE (TC 2.A.85) family.

It is found in the cell inner membrane. Functionally, forms an efflux pump with AaeA. Could function as a metabolic relief valve, allowing to eliminate certain compounds when they accumulate to high levels in the cell. This is p-hydroxybenzoic acid efflux pump subunit AaeB from Musicola paradisiaca (strain Ech703) (Dickeya paradisiaca).